A 956-amino-acid polypeptide reads, in one-letter code: MWYPPAAVVPFFESHSVTYEDRSAIAKWHFLPFDQRAVNEMTVLLNFLHISQGFHNETLYTDVRRRCMLMRSLFELVFANNYLELTNPKLLGWFLYLTAEDRTLIQNEGGLLSFLKKHPELGVTRQYVYVKAKPKGNYVPPPTTMASNDSRYPTFYGSSGCQNCGTSCPFGTKKCTRCGVHIVISQDKISVSENEKQLQLLPNSLKEELNVFQTSQSNVEMQNIHLGCTQSTLNTRSKQRSPEAHPHFYSKGMCSHAQCLSQLWQEVESREDAKHFKDTSAQASFCLDMELDVQSQVQRNDNTQNNQNQSYNPTEENDHNVDQETMPEYYSFSSISLDHTAWSNGSQSAETGFNDSITATKGSTELSDELSEAANSTAANSTDCFSCVSNSFELAEESGDCLDSRYEQQINKSNVGSSPKSKSSASVYVDQMIDACGDFRAFFTSTCATKTDQTFQVKNVATDTDLPAVSHEKDTQTMRMTTSDKNTITEVYMSDLDVLTEEFIKLKETEKGLKQMKSMNARRLCGCDCAQRVRKAELNLLALQFVMCQQHCWRRYFTSPLGESAYQGTEALPDSIAETLKTLQKDYHEMRQQILAGTPLDDLAPLSVNSEKISTGTNYSPSSVLAAHLDCAGSTIASDHKVDEEHTAMKVPPSEVCQDIETAPDEAKNECSKRDKALFILPKQTRISTEPKTVGANKDLNGSEAWFDAEEELGFPNQDGNMEKPNKMRETMRHKMETKGTDEDVSKQSSLLCITCLPGNITEHEVLLWFEKYNPTNVCISAFSNNTRAAIVYLKSYIDAKAAVEDLNGRSLQGHAVQVVHLSGTVSADLKPSDLSHSASESHKEDTAGDELRTKNLTYGSSHGGPRCSLERLTNVCNSPTASGTCVPQHYATMGSFDTIMARLSERHPNVARQRIVDALLELRAKHQGFLSGLPLRSIVDMTSELLTQTSSSARV.

Positions 301-321 (DNTQNNQNQSYNPTEENDHNV) are disordered. An RRM domain is found at 750–824 (SLLCITCLPG…HAVQVVHLSG (75 aa)). The disordered stretch occupies residues 831–855 (KPSDLSHSASESHKEDTAGDELRTK). Residues 840–854 (SESHKEDTAGDELRT) show a composition bias toward basic and acidic residues.

Its subcellular location is the cytoplasm. Its function is as follows. Component of intercellular bridges during meiosis. Intercellular bridges are evolutionarily conserved structures that connect differentiating germ cells. Not required for fertility. This Danio rerio (Zebrafish) protein is RNA-binding protein 44 (rbm44).